Reading from the N-terminus, the 192-residue chain is Protein ORF45 (192 aa).

Functionally, plays a role in the expression of ORF41, which itself is required for late gene expression. The protein is Protein ORF45 of Autographa californica nuclear polyhedrosis virus (AcMNPV).